The primary structure comprises 146 residues: Wheatwin-1 (146 aa).

The first 21 residues, 1–21 (MAARPMLVVALLCAAAAAATA), serve as a signal peptide directing secretion. Gln22 is subject to Pyrrolidone carboxylic acid. Positions 22–146 (QQATNVRATY…VNYQFVDCRD (125 aa)) constitute a Barwin domain. Cystine bridges form between Cys52/Cys84, Cys73/Cys107, and Cys87/Cys144.

In terms of assembly, monomer.

Inhibited by 5'-ADP. In terms of biological role, shows antifungal activity towards B.cinerea and towards the wheat-specific pathogenic fungi F.culmorum and F.graminearum (groups 1 and 2). Has ribonuclease activity. In Triticum aestivum (Wheat), this protein is Wheatwin-1 (PR4A).